Here is a 659-residue protein sequence, read N- to C-terminus: Threonine--tRNA ligase (659 aa).

A TGS domain is found at 7 to 70 (VQATVTVTFP…TDDATVEIIT (64 aa)). Residues 255–557 (DHRKLGAELE…LIEHTAGNFP (303 aa)) are catalytic. Zn(2+) is bound by residues Cys-353, His-404, and His-534.

Belongs to the class-II aminoacyl-tRNA synthetase family. In terms of assembly, homodimer. It depends on Zn(2+) as a cofactor.

It is found in the cytoplasm. It carries out the reaction tRNA(Thr) + L-threonine + ATP = L-threonyl-tRNA(Thr) + AMP + diphosphate + H(+). Its function is as follows. Catalyzes the attachment of threonine to tRNA(Thr) in a two-step reaction: L-threonine is first activated by ATP to form Thr-AMP and then transferred to the acceptor end of tRNA(Thr). Also edits incorrectly charged L-seryl-tRNA(Thr). The protein is Threonine--tRNA ligase of Chlorobium phaeobacteroides (strain BS1).